The sequence spans 795 residues: Phenylalanine--tRNA ligase beta subunit (795 aa).

In terms of domain architecture, tRNA-binding spans A39–R148. One can recognise a B5 domain in the interval P401 to A476. Residues D454, D460, E463, and E464 each coordinate Mg(2+). One can recognise an FDX-ACB domain in the interval S701–R794.

The protein belongs to the phenylalanyl-tRNA synthetase beta subunit family. Type 1 subfamily. In terms of assembly, tetramer of two alpha and two beta subunits. Mg(2+) is required as a cofactor.

It localises to the cytoplasm. The enzyme catalyses tRNA(Phe) + L-phenylalanine + ATP = L-phenylalanyl-tRNA(Phe) + AMP + diphosphate + H(+). This is Phenylalanine--tRNA ligase beta subunit from Idiomarina loihiensis (strain ATCC BAA-735 / DSM 15497 / L2-TR).